The chain runs to 136 residues: Ubiquinol-cytochrome c reductase complex assembly factor 2 (136 aa).

Residues 1 to 13 (MAASRYRRFLKLC) constitute a mitochondrion transit peptide. Residues 114-136 (KFAPGSPEGKHTAWARALPRPRT) are disordered.

Interacts with UQCC1. Forms a complex, named COMB/coordinator of mitochondrial CYTB biogenesis, composed of UQCC1, UQCC2, UQCC4, UQCC5 and UQCC6; stabilizes nascent cytochrome b/MT-CYB and promotes its membrane insertion. Forms a complex, named COMB/coordinator of mitochondrial CYTB biogenesis, composed of UQCC1, UQCC2, UQCC4, UQCC5 and UQCC6; stabilizes nascent cytochrome b/MT-CYB and promotes its membrane insertion. Forms a complex, named COMA, composed of UQCC1, UQCC2 and UQCC4; activates MT-CYB translation. Forms a complex, named COMC, composed of UQCC1, UQCC2; UQCC3 and UQCC4; mediates MT-CYB hemylation and association with the first nuclear-encoded CIII subunit UQCRQ.

It is found in the mitochondrion matrix. The protein localises to the mitochondrion nucleoid. Its subcellular location is the mitochondrion. The protein resides in the mitochondrion intermembrane space. It localises to the mitochondrion inner membrane. In terms of biological role, required for the assembly of the ubiquinol-cytochrome c reductase complex (mitochondrial respiratory chain complex III or cytochrome b-c1 complex). Plays a role in the modulation of respiratory chain activities such as oxygen consumption and ATP production and via its modulation of the respiratory chain activity can regulate skeletal muscle differentiation and insulin secretion by pancreatic beta-cells. Involved in cytochrome b translation and/or stability. The chain is Ubiquinol-cytochrome c reductase complex assembly factor 2 (UQCC2) from Bos taurus (Bovine).